The sequence spans 98 residues: Co-chaperonin GroES (98 aa).

Belongs to the GroES chaperonin family. In terms of assembly, heptamer of 7 subunits arranged in a ring. Interacts with the chaperonin GroEL.

Its subcellular location is the cytoplasm. Functionally, together with the chaperonin GroEL, plays an essential role in assisting protein folding. The GroEL-GroES system forms a nano-cage that allows encapsulation of the non-native substrate proteins and provides a physical environment optimized to promote and accelerate protein folding. GroES binds to the apical surface of the GroEL ring, thereby capping the opening of the GroEL channel. The chain is Co-chaperonin GroES from Coprothermobacter proteolyticus (strain ATCC 35245 / DSM 5265 / OCM 4 / BT).